Reading from the N-terminus, the 61-residue chain is 14-3-3-like protein (61 aa).

Belongs to the 14-3-3 family.

This chain is 14-3-3-like protein, found in Zea mays (Maize).